The chain runs to 231 residues: ATP-dependent dethiobiotin synthetase BioD 2 (231 aa).

13–18 (SVGKTV) contacts ATP. Residue T17 participates in Mg(2+) binding. Residue K38 is part of the active site. Residues D55, 112-115 (EGTG), 172-173 (NR), 201-203 (PYL), and Q208 contribute to the ATP site. The Mg(2+) site is built by D55 and E112.

The protein belongs to the dethiobiotin synthetase family. In terms of assembly, homodimer. It depends on Mg(2+) as a cofactor.

Its subcellular location is the cytoplasm. The enzyme catalyses (7R,8S)-7,8-diammoniononanoate + CO2 + ATP = (4R,5S)-dethiobiotin + ADP + phosphate + 3 H(+). It participates in cofactor biosynthesis; biotin biosynthesis; biotin from 7,8-diaminononanoate: step 1/2. Catalyzes a mechanistically unusual reaction, the ATP-dependent insertion of CO2 between the N7 and N8 nitrogen atoms of 7,8-diaminopelargonic acid (DAPA, also called 7,8-diammoniononanoate) to form a ureido ring. This chain is ATP-dependent dethiobiotin synthetase BioD 2, found in Escherichia coli O157:H7.